A 96-amino-acid chain; its full sequence is Large ribosomal subunit protein uL23 (96 aa).

Belongs to the universal ribosomal protein uL23 family. In terms of assembly, part of the 50S ribosomal subunit. Contacts protein L29, and trigger factor when it is bound to the ribosome.

Its function is as follows. One of the early assembly proteins it binds 23S rRNA. One of the proteins that surrounds the polypeptide exit tunnel on the outside of the ribosome. Forms the main docking site for trigger factor binding to the ribosome. The protein is Large ribosomal subunit protein uL23 of Ruthia magnifica subsp. Calyptogena magnifica.